The following is a 66-amino-acid chain: Large ribosomal subunit protein bL33c (66 aa).

The protein belongs to the bacterial ribosomal protein bL33 family.

The protein localises to the plastid. The chain is Large ribosomal subunit protein bL33c from Cuscuta gronovii (Common dodder).